The following is a 274-amino-acid chain: MLNTNKQAAASFQGVYFSYSELPLIRNLSFDVFEGEYVCIVGHNGSGKSTISKLLTGLLKPQAGTIKIFGKTISSENVTYLRNHIGIIFQNPDNQFIGITVEDDIAFGLENRRYTREKMKSIIEDVAQQAGITELLQKEPHNLSGGQKQRVAIASVLALNPAIIIFDESTSMLDPKAKRTIKQFMVELRNQGKCVISITHDMEEVTKADKVLVMNEGRLIRQGKPKDVFNSAAELQKIRLDIPFSLSLSTKVNGVTSTIDYQQLIEAIGKLWKK.

Positions 10–241 constitute an ABC transporter domain; the sequence is ASFQGVYFSY…AAELQKIRLD (232 aa). 42-49 contacts ATP; the sequence is GHNGSGKS.

Belongs to the ABC transporter superfamily. Energy-coupling factor EcfA family. In terms of assembly, forms a stable energy-coupling factor (ECF) transporter complex composed of 2 membrane-embedded substrate-binding proteins (S component), 2 ATP-binding proteins (A component) and 2 transmembrane proteins (T component).

Its subcellular location is the cell membrane. ATP-binding (A) component of a common energy-coupling factor (ECF) ABC-transporter complex. Unlike classic ABC transporters this ECF transporter provides the energy necessary to transport a number of different substrates. The sequence is that of Energy-coupling factor transporter ATP-binding protein EcfA1 from Mycoplasma pneumoniae (strain ATCC 29342 / M129 / Subtype 1) (Mycoplasmoides pneumoniae).